We begin with the raw amino-acid sequence, 443 residues long: D(2) dopamine receptor (443 aa).

Residues M1–Y37 are Extracellular-facing. N-linked (GlcNAc...) asparagine glycans are attached at residues N5, N17, and N23. The chain crosses the membrane as a helical span at residues A38–S60. Topologically, residues R61–N70 are cytoplasmic. A helical transmembrane segment spans residues Y71–Y93. Residues L94–D108 are Extracellular-facing. An intrachain disulfide couples C107 to C182. The chain crosses the membrane as a helical span at residues I109–I130. The Cytoplasmic segment spans residues D131–R151. A helical transmembrane segment spans residues V152–F172. The Extracellular segment spans residues G173–A188. The helical transmembrane segment at F189–Y213 threads the bilayer. Residues K211–Q373 form an interaction with PPP1R9B region. Residues I214 to Q373 lie on the Cytoplasmic side of the membrane. Residues E282 to A331 form a disordered region. A helical membrane pass occupies residues M374–L395. Residues N396–S409 lie on the Extracellular side of the membrane. C399 and C401 form a disulfide bridge. A helical membrane pass occupies residues A410–V431. Residues E432–C443 are Cytoplasmic-facing. C443 carries S-palmitoyl cysteine lipidation.

It belongs to the G-protein coupled receptor 1 family. Forms homo- and heterooligomers with DRD4. The interaction with DRD4 may modulate agonist-induced downstream signaling. Interacts with CADPS and CADPS2. Interacts with GPRASP1, PPP1R9B and CLIC6. Interacts with ARRB2. Interacts with HTR2A. Interacts with DRD1. Interacts with KCNA2. In terms of processing, palmitoylated. Palmitoylation which is required for proper localization to the plasma membrane and stability of the receptor could be carried on by ZDHHC4, ZDHHC3 and ZDHHC8.

It is found in the cell membrane. Its subcellular location is the golgi apparatus membrane. Its function is as follows. Dopamine receptor whose activity is mediated by G proteins which inhibit adenylyl cyclase. Positively regulates postnatal regression of retinal hyaloid vessels via suppression of VEGFR2/KDR activity, downstream of OPN5. The protein is D(2) dopamine receptor (DRD2) of Mustela putorius furo (European domestic ferret).